A 301-amino-acid chain; its full sequence is Probable alpha-L-glutamate ligase 1 (301 aa).

The region spanning 104–287 (LQLLSRKGIG…VTEPIVEYIE (184 aa)) is the ATP-grasp domain. Residues Lys-141, 178 to 179 (EY), Asp-187, and 211 to 213 (RSN) each bind ATP. Mg(2+) is bound by residues Asp-248, Glu-260, and Asn-262. Mn(2+) is bound by residues Asp-248, Glu-260, and Asn-262.

The protein belongs to the RimK family. The cofactor is Mg(2+). It depends on Mn(2+) as a cofactor.

In Shewanella sp. (strain W3-18-1), this protein is Probable alpha-L-glutamate ligase 1.